The following is a 116-amino-acid chain: Small ribosomal subunit protein bS16 (116 aa).

The protein belongs to the bacterial ribosomal protein bS16 family.

The protein is Small ribosomal subunit protein bS16 of Chlamydia trachomatis serovar L2 (strain ATCC VR-902B / DSM 19102 / 434/Bu).